A 124-amino-acid chain; its full sequence is Small ribosomal subunit protein uS12c (124 aa).

Belongs to the universal ribosomal protein uS12 family. Part of the 30S ribosomal subunit.

It is found in the plastid. Its subcellular location is the chloroplast. Its function is as follows. With S4 and S5 plays an important role in translational accuracy. Located at the interface of the 30S and 50S subunits. The polypeptide is Small ribosomal subunit protein uS12c (rps12) (Oryza nivara (Indian wild rice)).